Here is a 451-residue protein sequence, read N- to C-terminus: Adenylyltransferase and sulfurtransferase MOCS3 (451 aa).

The interval 42–62 is disordered; the sequence is GEDSDEAEESSNDMPTPQTKL. Acidic residues predominate over residues 43–52; the sequence is EDSDEAEESS. A Phosphothreonine modification is found at Thr60. ATP contacts are provided by residues Gly99, Asp120, 127-131, Lys144, and 188-189; these read SNLHR and DN. Zn(2+) is bound by residues Cys229 and Cys232. Cys246 acts as the Glycyl thioester intermediate; for adenylyltransferase activity in catalysis. Zn(2+) contacts are provided by Cys304 and Cys307. One can recognise a Rhodanese domain in the interval 353–449; it reads QSQPHLLLDV…WTGSVDATFP (97 aa). The active-site Cysteine persulfide intermediate; for sulfurtransferase activity is the Cys408.

In the N-terminal section; belongs to the HesA/MoeB/ThiF family. UBA4 subfamily. The cofactor is Zn(2+).

It localises to the cytoplasm. The protein localises to the cytosol. It carries out the reaction [molybdopterin-synthase sulfur-carrier protein]-C-terminal Gly-Gly + ATP + H(+) = [molybdopterin-synthase sulfur-carrier protein]-C-terminal Gly-Gly-AMP + diphosphate. The enzyme catalyses [molybdopterin-synthase sulfur-carrier protein]-C-terminal Gly-Gly-AMP + S-sulfanyl-L-cysteinyl-[cysteine desulfurase] + AH2 = [molybdopterin-synthase sulfur-carrier protein]-C-terminal-Gly-aminoethanethioate + L-cysteinyl-[cysteine desulfurase] + A + AMP + 2 H(+). It functions in the pathway tRNA modification; 5-methoxycarbonylmethyl-2-thiouridine-tRNA biosynthesis. Its pathway is cofactor biosynthesis; molybdopterin biosynthesis. In terms of biological role, plays a central role in 2-thiolation of mcm(5)S(2)U at tRNA wobble positions of cytosolic tRNA(Lys), tRNA(Glu) and tRNA(Gln). Also essential during biosynthesis of the molybdenum cofactor. Acts by mediating the C-terminal thiocarboxylation of sulfur carriers URM1 and MOCS2A. Its N-terminus first activates URM1 and MOCS2A as acyl-adenylates (-COAMP), then the persulfide sulfur on the catalytic cysteine is transferred to URM1 and MOCS2A to form thiocarboxylation (-COSH) of their C-terminus. The reaction probably involves hydrogen sulfide that is generated from the persulfide intermediate and that acts as a nucleophile towards URM1 and MOCS2A. Subsequently, a transient disulfide bond is formed. Does not use thiosulfate as sulfur donor; NFS1 probably acting as a sulfur donor for thiocarboxylation reactions. The sequence is that of Adenylyltransferase and sulfurtransferase MOCS3 from Drosophila persimilis (Fruit fly).